Consider the following 302-residue polypeptide: MIAANFLLNLFLYPILIKLFRRRRIGQYIRKEGPDLHGYKEGTPTMGGILFVLTGFLFGMISKTNTMVLLGMFLFFLIGFLDDFLSVARKDSTGLKTYQKALLQTLAAFIMLLLIRPDTNVDFFGSTIEMGKWYYLFALLVIVGSSNAMNLTDGLDGLAGWIYVSGSIPYWFFLKERGVSEDILLILGVGVLAFLVFNSKPAKIFMGDTGSITLGGVLGTVSVLTKTEFYLVLFFMIPVIETLSVILQVGSFKIFKRRIFKMSPLHHHFELIGWSEEKIVAVFTVFNLISSLVALEIFGVIG.

Helical transmembrane passes span 1 to 21 (MIAA…KLFR), 42 to 62 (GTPT…GMIS), 67 to 87 (MVLL…FLSV), 95 to 115 (LKTY…LLLI), 123 to 143 (FFGS…LVIV), 154 to 174 (GLDG…WFFL), 178 to 198 (GVSE…LVFN), 204 to 224 (IFMG…VSVL), 229 to 249 (FYLV…ILQV), and 279 to 299 (IVAV…EIFG).

The protein belongs to the glycosyltransferase 4 family. MraY subfamily. Mg(2+) serves as cofactor.

It is found in the cell inner membrane. It carries out the reaction UDP-N-acetyl-alpha-D-muramoyl-L-alanyl-gamma-D-glutamyl-meso-2,6-diaminopimeloyl-D-alanyl-D-alanine + di-trans,octa-cis-undecaprenyl phosphate = di-trans,octa-cis-undecaprenyl diphospho-N-acetyl-alpha-D-muramoyl-L-alanyl-D-glutamyl-meso-2,6-diaminopimeloyl-D-alanyl-D-alanine + UMP. It participates in cell wall biogenesis; peptidoglycan biosynthesis. Its function is as follows. Catalyzes the initial step of the lipid cycle reactions in the biosynthesis of the cell wall peptidoglycan: transfers peptidoglycan precursor phospho-MurNAc-pentapeptide from UDP-MurNAc-pentapeptide onto the lipid carrier undecaprenyl phosphate, yielding undecaprenyl-pyrophosphoryl-MurNAc-pentapeptide, known as lipid I. The sequence is that of Phospho-N-acetylmuramoyl-pentapeptide-transferase from Thermotoga maritima (strain ATCC 43589 / DSM 3109 / JCM 10099 / NBRC 100826 / MSB8).